Reading from the N-terminus, the 95-residue chain is Co-chaperonin GroES (95 aa).

Belongs to the GroES chaperonin family. Heptamer of 7 subunits arranged in a ring. Interacts with the chaperonin GroEL.

It localises to the cytoplasm. Functionally, together with the chaperonin GroEL, plays an essential role in assisting protein folding. The GroEL-GroES system forms a nano-cage that allows encapsulation of the non-native substrate proteins and provides a physical environment optimized to promote and accelerate protein folding. GroES binds to the apical surface of the GroEL ring, thereby capping the opening of the GroEL channel. The chain is Co-chaperonin GroES from Dichelobacter nodosus (strain VCS1703A).